Reading from the N-terminus, the 88-residue chain is Synaptonemal complex central element protein 3 (88 aa).

Positions 8 to 75 form a coiled coil; the sequence is ERSYDNMLKM…FLNCKEEMEK (68 aa).

In terms of assembly, homodimer. Can form higher-order homooligomers. Interacts with SYCP1 (via tetrameric core); the interaction remodels SYCP1 homotetramers to 2:1 heterotrimers with SYCE3. SYCP1/SYCE3 heterotrimers form lattice assemblies as part of the mature synaptonemal complex via both lateral and head-to-head interactions. Interacts with the SYCE1-SIX6OS1 complex; the interaction recruits the SYCE1-SIX6OS1 complex to the central element of the synaptonemal complex. Interacts with the SYCE2-TEX12 complex; the interaction promotes fibrous assembly of SYCE2-TEX12 as part of the synaptonemal complex central element. Interacts with SYCE1. Interacts with SYCE2. Interacts with proteasome subunit PSMA8; to participate in meiosis progression during spermatogenesis. Interacts with SPO16. In terms of tissue distribution, expression is restricted to spermatocytes and is absent in spermatogonia, spermatids and spermatogonia (at protein level). Expressed in adult testis and embryonic ovary. Expressed in the convoluted seminiferous tubules in spermatogonia and spermatocytes.

It is found in the nucleus. It localises to the chromosome. Its function is as follows. Major component of the transverse central element of synaptonemal complexes (SCS), formed between homologous chromosomes during meiotic prophase. Required for the assembly of the central element of the synaptonemal complex during meiosis, via remodeling of SYCP1 lattice structures and promoting recruitment of SYCE2-TEX12 and SYCE1-SIX60S1 complexes. Required for chromosome loading of the central element-specific SCS proteins, and for initiating synapsis between homologous chromosomes. Chromosome loading appears to require SYCP1. Required for fertility and normal testis development. May play a role in apoptosis of spermatogenic cells and pathogenesis of cryptorchidism. The chain is Synaptonemal complex central element protein 3 from Mus musculus (Mouse).